A 492-amino-acid polypeptide reads, in one-letter code: Probable protein phosphatase 2C 33 (492 aa).

The interval Met1–Glu46 is disordered. The span at Val24 to Gly35 shows a compositional bias: basic residues. In terms of domain architecture, PPM-type phosphatase spans Val64 to Leu393. Asp100, Gly101, Asp338, and Asp384 together coordinate Mn(2+). Residues Ser406 to Thr468 form a disordered region. The segment covering Asp412–Ala427 has biased composition (acidic residues). A compositionally biased stretch (basic and acidic residues) spans Ser441–Asp460.

The protein belongs to the PP2C family. Mg(2+) is required as a cofactor. Requires Mn(2+) as cofactor.

The enzyme catalyses O-phospho-L-seryl-[protein] + H2O = L-seryl-[protein] + phosphate. It carries out the reaction O-phospho-L-threonyl-[protein] + H2O = L-threonyl-[protein] + phosphate. In Arabidopsis thaliana (Mouse-ear cress), this protein is Probable protein phosphatase 2C 33 (PPC6-1).